The primary structure comprises 266 residues: Translation initiation factor 2 subunit alpha (266 aa).

The S1 motif domain maps to 12–83 (GEILIATVKQ…RKGTVDVSLK (72 aa)).

It belongs to the eIF-2-alpha family. In terms of assembly, heterotrimer composed of an alpha, a beta and a gamma chain.

EIF-2 functions in the early steps of protein synthesis by forming a ternary complex with GTP and initiator tRNA. This chain is Translation initiation factor 2 subunit alpha, found in Saccharolobus islandicus (strain M.16.27) (Sulfolobus islandicus).